The following is a 596-amino-acid chain: Beta-fructofuranosidase, insoluble isoenzyme 7 (596 aa).

Residues 1-24 form the signal peptide; that stretch reads MARLGLAVCAASFHLFLLLASTSS. Substrate is bound by residues 51–54, Q70, and W78; that span reads WQND. Residue D54 is part of the active site. Residue N82 is glycosylated (N-linked (GlcNAc...) asparagine). Substrate contacts are provided by residues 115–116, 179–180, and E234; these read WS and RD. N-linked (GlcNAc...) asparagine glycosylation is present at N330. An intrachain disulfide couples C432 to C478. N-linked (GlcNAc...) asparagine glycosylation is present at N552.

This sequence belongs to the glycosyl hydrolase 32 family. Expressed in roots, leaves and flowers. Weakly expressed in seeds.

It is found in the secreted. The protein resides in the extracellular space. Its subcellular location is the apoplast. The protein localises to the cell wall. The catalysed reaction is Hydrolysis of terminal non-reducing beta-D-fructofuranoside residues in beta-D-fructofuranosides.. Its function is as follows. May play a role in sucrose partitioning during seed development. This Oryza sativa subsp. japonica (Rice) protein is Beta-fructofuranosidase, insoluble isoenzyme 7 (CIN7).